An 896-amino-acid polypeptide reads, in one-letter code: Protein bride of sevenless (896 aa).

Residues 1–31 (MKVMDALQSGRRKPLPVALLCILVTVFCVLE) form the signal peptide. Over 32 to 530 (CHGADLTSPT…MFWRIKMDTW (499 aa)) the chain is Extracellular. Positions 38 to 84 (TSPTKKSAPLRITKPQPTSQQAKPISITTRAPTTVASTTDDEVSSSV) are disordered. Residues 52 to 64 (PQPTSQQAKPISI) are compositionally biased toward polar residues. A compositionally biased stretch (low complexity) spans 65-84 (TTRAPTTVASTTDDEVSSSV). N-linked (GlcNAc...) asparagine glycans are attached at residues Asn183, Asn307, Asn474, and Asn485. 7 helical membrane passes run 531–554 (VATG…FIVV), 570–588 (ILLL…PYSI), 615–637 (VFIM…VMLA), 655–676 (AVIC…LVVM), 693–712 (WLWG…GALI), 728–748 (IVIG…LSLF), and 759–781 (LGLQ…FLIV). Residues 782–896 (RGIERSDIAQ…SPDHNKITRF (115 aa)) are Cytoplasmic-facing. Disordered regions lie at residues 825–844 (SQDE…PLRG) and 861–896 (ANIN…ITRF). Residues 874 to 884 (QSPSRSSVSSL) show a composition bias toward low complexity.

Belongs to the G-protein coupled receptor 3 family. In terms of tissue distribution, expressed exclusively by R8 photoreceptor cells and is internalized in a sev-dependent manner by R7 cells.

Its subcellular location is the cell membrane. Acts as a ligand for sevenless tyrosine-kinase receptor during eye development. The protein is Protein bride of sevenless (boss) of Drosophila melanogaster (Fruit fly).